Reading from the N-terminus, the 147-residue chain is Lysozyme C (147 aa).

The N-terminal stretch at methionine 1 to glycine 18 is a signal peptide. One can recognise a C-type lysozyme domain in the interval lysine 19 to leucine 147. 4 cysteine pairs are disulfide-bonded: cysteine 24-cysteine 145, cysteine 48-cysteine 133, cysteine 82-cysteine 98, and cysteine 94-cysteine 112. Active-site residues include glutamate 53 and aspartate 70.

The protein belongs to the glycosyl hydrolase 22 family. In terms of assembly, monomer.

The protein localises to the secreted. The catalysed reaction is Hydrolysis of (1-&gt;4)-beta-linkages between N-acetylmuramic acid and N-acetyl-D-glucosamine residues in a peptidoglycan and between N-acetyl-D-glucosamine residues in chitodextrins.. Lysozymes have primarily a bacteriolytic function; those in tissues and body fluids are associated with the monocyte-macrophage system and enhance the activity of immunoagents. This Coturnix japonica (Japanese quail) protein is Lysozyme C (LYZ).